We begin with the raw amino-acid sequence, 636 residues long: Protein BCAP (636 aa).

Coiled coils occupy residues 36-97 (LSCL…EQKE), 141-220 (ESEN…WNLQ), 249-325 (YKQR…HGKN), 377-484 (ISSE…ECQE), and 519-631 (LEEE…KMNS).

This sequence belongs to the ODF2 family. As to expression, mainly expressed in trachea and testis. Not detected in bone marrow, bladder, leukocytes. Only weakly detected in tongue, stomach, brain and ovaries.

It localises to the cytoplasm. The protein localises to the cytoskeleton. Its subcellular location is the microtubule organizing center. The protein resides in the centrosome. It is found in the centriole. It localises to the centriolar satellite. The protein localises to the cilium basal body. In terms of biological role, acts as a suppressor of ciliogenesis, specifically, the initiation of ciliogenesis. This is Protein BCAP from Homo sapiens (Human).